We begin with the raw amino-acid sequence, 316 residues long: Acetyl-coenzyme A carboxylase carboxyl transferase subunit alpha (316 aa).

Residues 36–290 (PLRTQLETLR…GSVISRHLDD (255 aa)) enclose the CoA carboxyltransferase C-terminal domain.

Belongs to the AccA family. In terms of assembly, acetyl-CoA carboxylase is a heterohexamer composed of biotin carboxyl carrier protein (AccB), biotin carboxylase (AccC) and two subunits each of ACCase subunit alpha (AccA) and ACCase subunit beta (AccD).

Its subcellular location is the cytoplasm. The catalysed reaction is N(6)-carboxybiotinyl-L-lysyl-[protein] + acetyl-CoA = N(6)-biotinyl-L-lysyl-[protein] + malonyl-CoA. It participates in lipid metabolism; malonyl-CoA biosynthesis; malonyl-CoA from acetyl-CoA: step 1/1. Its function is as follows. Component of the acetyl coenzyme A carboxylase (ACC) complex. First, biotin carboxylase catalyzes the carboxylation of biotin on its carrier protein (BCCP) and then the CO(2) group is transferred by the carboxyltransferase to acetyl-CoA to form malonyl-CoA. This chain is Acetyl-coenzyme A carboxylase carboxyl transferase subunit alpha, found in Deinococcus radiodurans (strain ATCC 13939 / DSM 20539 / JCM 16871 / CCUG 27074 / LMG 4051 / NBRC 15346 / NCIMB 9279 / VKM B-1422 / R1).